The primary structure comprises 285 residues: Phasyl DNA replicon protein arp (285 aa).

Functionally, essential for autonomous replication of the phasyl DNA replicon. This chain is Phasyl DNA replicon protein arp (arp), found in Escherichia coli.